The chain runs to 198 residues: ATP-dependent Clp protease proteolytic subunit (198 aa).

Residue serine 101 is the Nucleophile of the active site. The active site involves histidine 126.

It belongs to the peptidase S14 family. In terms of assembly, component of the chloroplastic Clp protease core complex.

Its subcellular location is the plastid. It is found in the chloroplast stroma. It catalyses the reaction Hydrolysis of proteins to small peptides in the presence of ATP and magnesium. alpha-casein is the usual test substrate. In the absence of ATP, only oligopeptides shorter than five residues are hydrolyzed (such as succinyl-Leu-Tyr-|-NHMec, and Leu-Tyr-Leu-|-Tyr-Trp, in which cleavage of the -Tyr-|-Leu- and -Tyr-|-Trp bonds also occurs).. Cleaves peptides in various proteins in a process that requires ATP hydrolysis. Has a chymotrypsin-like activity. Plays a major role in the degradation of misfolded proteins. This is ATP-dependent Clp protease proteolytic subunit from Psilotum nudum (Whisk fern).